We begin with the raw amino-acid sequence, 230 residues long: Ribonuclease 3 (230 aa).

One can recognise an RNase III domain in the interval 5 to 134 (EALLENSFNI…FLGALLLDKG (130 aa)). Glu-47 serves as a coordination point for Mg(2+). Residue Asp-51 is part of the active site. Positions 120 and 123 each coordinate Mg(2+). Glu-123 is a catalytic residue. One can recognise a DRBM domain in the interval 160-229 (DYKTCLQELL…AKNALAQLSE (70 aa)).

The protein belongs to the ribonuclease III family. In terms of assembly, homodimer. The cofactor is Mg(2+).

The protein localises to the cytoplasm. It carries out the reaction Endonucleolytic cleavage to 5'-phosphomonoester.. Functionally, digests double-stranded RNA. Involved in the processing of primary rRNA transcript to yield the immediate precursors to the large and small rRNAs (23S and 16S). Processes some mRNAs, and tRNAs when they are encoded in the rRNA operon. Processes pre-crRNA and tracrRNA of type II CRISPR loci if present in the organism. This Streptococcus equi subsp. zooepidemicus (strain H70) protein is Ribonuclease 3.